A 294-amino-acid polypeptide reads, in one-letter code: ATP synthase gamma chain (294 aa).

This sequence belongs to the ATPase gamma chain family. In terms of assembly, F-type ATPases have 2 components, CF(1) - the catalytic core - and CF(0) - the membrane proton channel. CF(1) has five subunits: alpha(3), beta(3), gamma(1), delta(1), epsilon(1). CF(0) has three main subunits: a, b and c.

It is found in the cell inner membrane. Functionally, produces ATP from ADP in the presence of a proton gradient across the membrane. The gamma chain is believed to be important in regulating ATPase activity and the flow of protons through the CF(0) complex. The protein is ATP synthase gamma chain of Nitrosomonas eutropha (strain DSM 101675 / C91 / Nm57).